We begin with the raw amino-acid sequence, 325 residues long: Iodotyrosine dehalogenase 1 homolog (325 aa).

A helical membrane pass occupies residues 42–62; the sequence is VLNVLFTLGVILFVIYQVASL. Topologically, residues 63–325 are cytoplasmic; sequence LHRMNKRVEK…KPVEHITKLY (263 aa). Residues 135 to 139, 163 to 164, 273 to 275, and R315 contribute to the FMN site; these read RRSCR, SV, and VTS.

It belongs to the nitroreductase family. FMN is required as a cofactor. As to expression, expressed in body-wall, anal depressor and vulval muscles.

It is found in the membrane. Functionally, may contribute to coordination of muscle contraction as regulatory subunit of the nonessential sup-9 potassium channel complex. May act downstream of sup-10. This Caenorhabditis elegans protein is Iodotyrosine dehalogenase 1 homolog.